The sequence spans 554 residues: Phospho-2-dehydro-3-deoxyheptonate aldolase 1, chloroplastic (554 aa).

Residues 1–39 (MSLATSSSMAGGAAVVPRSATATTASAFVTMKRRATAVR) constitute a chloroplast transit peptide. Positions 41–70 (VHAAEPSKNPPVGVPSAAKTSSPSVAAPEK) are disordered.

This sequence belongs to the class-II DAHP synthase family.

It is found in the plastid. It localises to the chloroplast. It carries out the reaction D-erythrose 4-phosphate + phosphoenolpyruvate + H2O = 7-phospho-2-dehydro-3-deoxy-D-arabino-heptonate + phosphate. The protein operates within metabolic intermediate biosynthesis; chorismate biosynthesis; chorismate from D-erythrose 4-phosphate and phosphoenolpyruvate: step 1/7. The sequence is that of Phospho-2-dehydro-3-deoxyheptonate aldolase 1, chloroplastic (DAHPS1) from Oryza sativa subsp. japonica (Rice).